The primary structure comprises 1096 residues: Pullulanase (1096 aa).

Residues 1–19 form the signal peptide; that stretch reads MLRYTCHALFLGSLVLLSG. Cysteine 20 carries the N-palmitoyl cysteine lipid modification. Cysteine 20 is lipidated: S-diacylglycerol cysteine. Low complexity predominate over residues 24–34; the sequence is SSSSTSGSPGS. The tract at residues 24–50 is disordered; that stretch reads SSSSTSGSPGSPGNPGNPGTPGTPDPQ. Residue aspartate 694 is the Nucleophile of the active site. The active-site Proton donor is glutamate 723. The interval 1014-1044 is disordered; the sequence is QAGRQSGQPCRRHRGGDQRRAGKPDAAGLRR.

It belongs to the glycosyl hydrolase 13 family. As to quaternary structure, homotrimer.

It is found in the cell membrane. It carries out the reaction Hydrolysis of (1-&gt;6)-alpha-D-glucosidic linkages in pullulan, amylopectin and glycogen, and in the alpha- and beta-limit dextrins of amylopectin and glycogen.. The chain is Pullulanase (pulA) from Klebsiella aerogenes (Enterobacter aerogenes).